Reading from the N-terminus, the 401-residue chain is Multidrug resistance protein MdtH (401 aa).

Helical transmembrane passes span 13–33 (YFLL…FPLI), 34–54 (SIRF…ALGL), 99–116 (PWIL…GTLF), 139–159 (LLMM…SWLL), 165–185 (FVCW…AWLL), 214–234 (VLTL…LPIV), 243–263 (AAVK…LYPL), 277–297 (LMAG…ITHL), 299–319 (TLFM…PARE), 340–360 (LGLA…YDTG), and 368–388 (LPWF…YWQF).

The protein belongs to the major facilitator superfamily. DHA1 family. MdtH (TC 2.A.1.2.21) subfamily.

The protein localises to the cell inner membrane. This chain is Multidrug resistance protein MdtH, found in Yersinia pseudotuberculosis serotype O:1b (strain IP 31758).